A 64-amino-acid polypeptide reads, in one-letter code: Protein sigN173 (64 aa).

This chain is Protein sigN173, found in Dictyostelium discoideum (Social amoeba).